The primary structure comprises 289 residues: Deleted in azoospermia-like (289 aa).

The tract at residues Met-1–Ser-20 is disordered. The region spanning Asn-36–Cys-117 is the RRM domain. Positions Thr-162 to Gln-187 constitute a DAZ domain.

It belongs to the RRM DAZ family.

Its subcellular location is the cytoplasm. Its function is as follows. RNA-binding protein, which probably plays a central role in gametogenesis in both males and females. Acts by binding to the 3'-UTR of mRNA, specifically recognizing GUU triplets, and promoting the translation of key transcripts. The protein is Deleted in azoospermia-like (DAZL) of Gallus gallus (Chicken).